The primary structure comprises 172 residues: Putative RNA polymerase II transcriptional coactivator (172 aa).

Disordered regions lie at residues 1 to 43 and 123 to 172; these read MPPK…QDGN and QTDA…DDDE. Over residues 24 to 43 the composition is skewed to polar residues; that stretch reads GNTGKAQPQELTKGSDQDGN. Positions 131–144 are enriched in basic and acidic residues; sequence PKVKALESNKESIK. Over residues 158 to 172 the composition is skewed to acidic residues; the sequence is TSDEEEAAEDEDDDE.

Belongs to the transcriptional coactivator PC4 family.

It is found in the nucleus. Functionally, general coactivator that functions cooperatively with TAFs and mediates functional interactions between upstream activators and the general transcriptional machinery. Binds single-stranded DNA. The polypeptide is Putative RNA polymerase II transcriptional coactivator (Neurospora crassa (strain ATCC 24698 / 74-OR23-1A / CBS 708.71 / DSM 1257 / FGSC 987)).